The primary structure comprises 164 residues: MRCPFCRHDDTQVVDSRVSEDGAAIRRRRRCPACDKRFTTYERVELALPSVVKKDGSRTEFDRRKIVASMQLALRKRPVAADAIDAAASRIEYQLLGSGEREVRSERLGELVMNELRALDTIAYVRFASVYRRFEDVSEFEDVIEEFRRTNAPPAAPAKPTRKR.

A zinc finger spans residues 3–34 (CPFCRHDDTQVVDSRVSEDGAAIRRRRRCPAC). The region spanning 49 to 139 (PSVVKKDGSR…VYRRFEDVSE (91 aa)) is the ATP-cone domain.

This sequence belongs to the NrdR family. Requires Zn(2+) as cofactor.

Functionally, negatively regulates transcription of bacterial ribonucleotide reductase nrd genes and operons by binding to NrdR-boxes. This chain is Transcriptional repressor NrdR, found in Paraburkholderia phymatum (strain DSM 17167 / CIP 108236 / LMG 21445 / STM815) (Burkholderia phymatum).